The following is a 279-amino-acid chain: DegV domain-containing protein SpyM3_1149 (279 aa).

One can recognise a DegV domain in the interval 4–278 (IKIVTDSSIT…EGAFAVMVRY (275 aa)). 2 residues coordinate hexadecanoate: Thr62 and Ser95.

In terms of biological role, may bind long-chain fatty acids, such as palmitate, and may play a role in lipid transport or fatty acid metabolism. The protein is DegV domain-containing protein SpyM3_1149 of Streptococcus pyogenes serotype M3 (strain ATCC BAA-595 / MGAS315).